A 297-amino-acid polypeptide reads, in one-letter code: HTH-type transcriptional regulator ArgP (297 aa).

Residues 4–60 (PDYRTLQALDAVIRERGFERAAQKLCITQSAVSQRIKQLENMFGQPLLVRTVPPRPT) enclose the HTH lysR-type domain. A DNA-binding region (H-T-H motif) is located at residues 21 to 40 (FERAAQKLCITQSAVSQRIK).

Belongs to the LysR transcriptional regulatory family. As to quaternary structure, homodimer.

In terms of biological role, controls the transcription of genes involved in arginine and lysine metabolism. This Salmonella dublin (strain CT_02021853) protein is HTH-type transcriptional regulator ArgP.